An 884-amino-acid polypeptide reads, in one-letter code: DNA mismatch repair protein MutS (884 aa).

643–650 (GPNMGGKS) serves as a coordination point for ATP.

It belongs to the DNA mismatch repair MutS family.

This protein is involved in the repair of mismatches in DNA. It is possible that it carries out the mismatch recognition step. This protein has a weak ATPase activity. The protein is DNA mismatch repair protein MutS of Methylobacillus flagellatus (strain ATCC 51484 / DSM 6875 / VKM B-1610 / KT).